We begin with the raw amino-acid sequence, 571 residues long: Adenine deaminase (571 aa).

It belongs to the metallo-dependent hydrolases superfamily. Adenine deaminase family. Mn(2+) is required as a cofactor.

The enzyme catalyses adenine + H2O + H(+) = hypoxanthine + NH4(+). The protein is Adenine deaminase of Dehalococcoides mccartyi (strain CBDB1).